Consider the following 344-residue polypeptide: GTP 3',8-cyclase (344 aa).

Residues 19–245 form the Radical SAM core domain; sequence PFGRAVTYLR…DIPYRTGGPA (227 aa). Position 28 (Arg28) interacts with GTP. The [4Fe-4S] cluster site is built by Cys35 and Cys39. Tyr41 is a binding site for S-adenosyl-L-methionine. Cys42 provides a ligand contact to [4Fe-4S] cluster. Residue Arg77 participates in GTP binding. Gly81 is a binding site for S-adenosyl-L-methionine. Residue Thr111 coordinates GTP. Ser135 serves as a coordination point for S-adenosyl-L-methionine. Lys171 lines the GTP pocket. Met205 lines the S-adenosyl-L-methionine pocket. [4Fe-4S] cluster contacts are provided by Cys268 and Cys271. 273-275 provides a ligand contact to GTP; the sequence is RVR. Cys285 lines the [4Fe-4S] cluster pocket.

Belongs to the radical SAM superfamily. MoaA family. As to quaternary structure, monomer and homodimer. [4Fe-4S] cluster is required as a cofactor.

It catalyses the reaction GTP + AH2 + S-adenosyl-L-methionine = (8S)-3',8-cyclo-7,8-dihydroguanosine 5'-triphosphate + 5'-deoxyadenosine + L-methionine + A + H(+). Its pathway is cofactor biosynthesis; molybdopterin biosynthesis. Its function is as follows. Catalyzes the cyclization of GTP to (8S)-3',8-cyclo-7,8-dihydroguanosine 5'-triphosphate. This is GTP 3',8-cyclase from Brucella melitensis biotype 2 (strain ATCC 23457).